Reading from the N-terminus, the 253-residue chain is DNA polymerase sliding clamp (253 aa).

The protein belongs to the PCNA family. Homotrimer. The subunits circularize to form a toroid; DNA passes through its center. Replication factor C (RFC) is required to load the toroid on the DNA.

Functionally, sliding clamp subunit that acts as a moving platform for DNA processing. Responsible for tethering the catalytic subunit of DNA polymerase and other proteins to DNA during high-speed replication. The chain is DNA polymerase sliding clamp from Methanopyrus kandleri (strain AV19 / DSM 6324 / JCM 9639 / NBRC 100938).